The following is a 428-amino-acid chain: Enolase (428 aa).

Q164 lines the (2R)-2-phosphoglycerate pocket. The active-site Proton donor is E206. Positions 243, 286, and 313 each coordinate Mg(2+). 4 residues coordinate (2R)-2-phosphoglycerate: K338, R367, S368, and K389. K338 serves as the catalytic Proton acceptor.

This sequence belongs to the enolase family. Requires Mg(2+) as cofactor.

It is found in the cytoplasm. Its subcellular location is the secreted. It localises to the cell surface. The enzyme catalyses (2R)-2-phosphoglycerate = phosphoenolpyruvate + H2O. It functions in the pathway carbohydrate degradation; glycolysis; pyruvate from D-glyceraldehyde 3-phosphate: step 4/5. In terms of biological role, catalyzes the reversible conversion of 2-phosphoglycerate (2-PG) into phosphoenolpyruvate (PEP). It is essential for the degradation of carbohydrates via glycolysis. The sequence is that of Enolase from Dehalococcoides mccartyi (strain ATCC BAA-2100 / JCM 16839 / KCTC 5957 / BAV1).